Reading from the N-terminus, the 396-residue chain is 2,3-diketo-5-methylthiopentyl-1-phosphate enolase (396 aa).

Lys-85 acts as the Proton acceptor in catalysis. Residues Lys-134, 160–163 (KDDE), His-251, Gly-323, and 345–346 (GG) each bind substrate. Mg(2+) contacts are provided by Lys-160, Asp-162, and Glu-163. Residue Lys-160 is modified to N6-carboxylysine.

The protein belongs to the RuBisCO large chain family. Type IV subfamily. Homodimer. It depends on Mg(2+) as a cofactor.

The enzyme catalyses 5-methylsulfanyl-2,3-dioxopentyl phosphate = 2-hydroxy-5-methylsulfanyl-3-oxopent-1-enyl phosphate. It functions in the pathway amino-acid biosynthesis; L-methionine biosynthesis via salvage pathway; L-methionine from S-methyl-5-thio-alpha-D-ribose 1-phosphate: step 3/6. Catalyzes the enolization of 2,3-diketo-5-methylthiopentyl-1-phosphate (DK-MTP-1-P) into 2-hydroxy-3-keto-5-methylthiopentenyl-1-phosphate (HK-MTPenyl-1-P). The protein is 2,3-diketo-5-methylthiopentyl-1-phosphate enolase of Exiguobacterium sibiricum (strain DSM 17290 / CCUG 55495 / CIP 109462 / JCM 13490 / 255-15).